A 1085-amino-acid polypeptide reads, in one-letter code: Protein CROWDED NUCLEI 3 (1085 aa).

Coiled coils occupy residues 51-149 (DEAS…NDLK) and 185-695 (RERA…LDVL). Lys318 participates in a covalent cross-link: Glycyl lysine isopeptide (Lys-Gly) (interchain with G-Cter in ubiquitin). The Nuclear localization signal motif lies at 404-411 (AKREAALE). Residue Lys661 forms a Glycyl lysine isopeptide (Lys-Gly) (interchain with G-Cter in ubiquitin) linkage. Phosphoserine occurs at positions 764, 787, 825, and 843. Disordered regions lie at residues 801–997 (TVKL…GKAE) and 1020–1077 (NNTG…SIGK). Over residues 813 to 825 (SLDRVSGEDHEPS) the composition is skewed to basic and acidic residues. The segment covering 854-868 (RRGRGRGRGRGKSVR) has biased composition (basic residues). Basic and acidic residues predominate over residues 877-897 (VSRDSKPSDGETPRKRQREQT). At Ser910 the chain carries Phosphoserine. Over residues 932–941 (VSQTPGQTRY) the composition is skewed to polar residues. Basic and acidic residues predominate over residues 949–995 (VGTEEDKAQASKGATEKQERVNDDIRKVPSPKETRTPPEGENRENGK). Residues 1045–1066 (EEDDENISMIEEENEGEEEEET) show a composition bias toward acidic residues.

Belongs to the CRWN family. Core component of the LINC complex which is composed of inner nuclear membrane SUN domain-containing proteins coupled to outer nuclear membrane WIP proteins, the nucleoskeletal CRWN/LINC proteins, and, possibly, KAKU4. As to expression, expressed at low levels in roots, leaves, flowers and flower stalks.

The protein resides in the nucleus membrane. It is found in the nucleus. Its subcellular location is the nucleoplasm. The protein localises to the cytoplasm. It localises to the nucleus lamina. Component of SUN-protein-containing multivariate complexes also called LINC complexes which link the nucleoskeleton and cytoskeleton by providing versatile outer nuclear membrane attachment sites for cytoskeletal filaments. Required for nucleus structure organization (e.g. size and shape). The protein is Protein CROWDED NUCLEI 3 of Arabidopsis thaliana (Mouse-ear cress).